The primary structure comprises 96 residues: Probable quinol oxidase subunit 4 (96 aa).

3 helical membrane passes run 8-28 (TVGF…TLYT), 36-56 (ITII…MFMH), and 68-88 (FKVL…YWVM).

It belongs to the cytochrome c oxidase bacterial subunit 4 family.

It is found in the cell membrane. It carries out the reaction 2 a quinol + O2 = 2 a quinone + 2 H2O. In terms of biological role, catalyzes quinol oxidation with the concomitant reduction of oxygen to water. This chain is Probable quinol oxidase subunit 4 (qoxD), found in Staphylococcus saprophyticus subsp. saprophyticus (strain ATCC 15305 / DSM 20229 / NCIMB 8711 / NCTC 7292 / S-41).